The chain runs to 248 residues: Probable transcriptional regulatory protein Acid_5948 (248 aa).

The protein belongs to the TACO1 family.

The protein resides in the cytoplasm. The protein is Probable transcriptional regulatory protein Acid_5948 of Solibacter usitatus (strain Ellin6076).